The following is a 1580-amino-acid chain: Transcriptional activator GLI3 (1580 aa).

M1 carries the N-acetylmethionine modification. Composition is skewed to polar residues over residues 1–10 (MEAQSHSSTT) and 58–78 (ITMQPQNVQGLSKVSEEPSTS). Residues 1–79 (MEAQSHSSTT…KVSEEPSTSS (79 aa)) are disordered. R175 is subject to Omega-N-methylarginine. Residues 368–475 (QSLGSAFGHS…DKDESKQEPE (108 aa)) are disordered. Residues 401–427 (NPVQVSSGPSESSQNKPTSESAVSSTG) show a composition bias toward polar residues. Residues K438 and K462 each participate in a glycyl lysine isopeptide (Lys-Gly) (interchain with G-Cter in SUMO2) cross-link. Basic and acidic residues predominate over residues 461–474 (VKEEGDKDESKQEP). C2H2-type zinc fingers lie at residues 480-505 (TNCHWEGCAREFDTQEQLVHHINNDH), 513-540 (FVCRWLDCSREQKPFKAQYMLVVHMRRH), 546-570 (HKCTFEGCTKAYSRLENLKTHLRSH), 576-601 (YVCEHEGCNKAFSNASDRAKHQNRTH), and 607-632 (YVCKIPGCTKRYTDPSSLRKHVKTVH). The segment at 620 to 728 (DPSSLRKHVK…PISNYSNSGL (109 aa)) is disordered. The span at 632 to 648 (HGPEAHVTKKQRGDIHP) shows a compositional bias: basic and acidic residues. S664 is subject to Phosphoserine. A compositionally biased stretch (basic and acidic residues) spans 684 to 699 (SKREECLQVKTVKAEK). Residues 703 to 726 (SQPSPGGQSSCSSQQSPISNYSNS) are compositionally biased toward low complexity. The tract at residues 745–845 (DETPIMDSTI…VDVTMLNMLN (101 aa)) is mediates interaction with DZIP1. A Glycyl lysine isopeptide (Lys-Gly) (interchain with G-Cter in ubiquitin) cross-link involves residue K773. K779 participates in a covalent cross-link: Glycyl lysine isopeptide (Lys-Gly) (interchain with G-Cter in SUMO2); alternate. K779 is covalently cross-linked (Glycyl lysine isopeptide (Lys-Gly) (interchain with G-Cter in ubiquitin); alternate). Glycyl lysine isopeptide (Lys-Gly) (interchain with G-Cter in ubiquitin) cross-links involve residues K784 and K800. Phosphoserine; by PKA occurs at positions 849, 865, 877, and 907. The segment covering 863 to 882 (RSSGISPCFSSRRSSEASQA) has biased composition (low complexity). The tract at residues 863–918 (RSSGISPCFSSRRSSEASQAEGRPQNVSVADSYDPISTDASRRSSEASQSDGLPSL) is disordered. The span at 908-918 (EASQSDGLPSL) shows a compositional bias: polar residues. A phosphoserine; by PKA mark is found at S980 and S1006. Residues 981–1042 (DGGAHGYGRR…PAMATSAEKR (62 aa)) are disordered.

Belongs to the GLI C2H2-type zinc-finger protein family. The full-length GLI3 form (GLI3FL) interacts with SUFU and this interaction regulates the formation of either repressor or activator forms of GLI3. Its association with SUFU is regulated by Hh signaling and dissociation of the SUFU-GLI3 interaction requires the presence of the ciliary motor KIF3A. Interacts with KIF7. The activator form of GLI3 (GLI3A) but not the repressor form (GLI3R) can interact with TRPS1. The phosphorylated form interacts with BTRC. Interacts with ZIC1. Interacts with ZIC3 (via C2H2-type domains 3, 4 and 5); the interaction enhances its transcriptional activity. Interacts with WRD11; the interaction associates EMX1 with GLI3. Interacts with DZIP1; retains GLI3 within the cytoplasm. Phosphorylated on multiple sites by protein kinase A (PKA) and phosphorylation by PKA primes further phosphorylation by CK1 and GSK3. Phosphorylated by DYRK2 (in vitro). Phosphorylation is essential for its proteolytic processing. Post-translationally, transcriptional repressor GLI3R, a C-terminally truncated form, is generated from the full-length GLI3 protein (GLI3FL/GLI3-190) through proteolytic processing. This process requires PKA-primed phosphorylation of GLI3, ubiquitination of GLI3 and the presence of BTRC. GLI3FL is complexed with SUFU in the cytoplasm and is maintained in a neutral state. Without the Hh signal, the SUFU-GLI3 complex is recruited to cilia, leading to the efficient processing of GLI3FL into GLI3R. GLI3R formation leads to its dissociation from SUFU, allowing it to translocate into the nucleus, and repress Hh target genes. When Hh signaling is initiated, SUFU dissociates from GLI3FL and this has two consequences. First, GLI3R production is halted. Second, free GLI3FL translocates to the nucleus, where it is phosphorylated, destabilized, and converted to a transcriptional activator (GLI3A). Phosphorylated in vitro by ULK3. As to expression, is expressed in a wide variety of normal adult tissues, including lung, colon, spleen, placenta, testis, and myometrium.

It is found in the nucleus. The protein resides in the cytoplasm. Its subcellular location is the cell projection. It localises to the cilium. In terms of biological role, has a dual function as a transcriptional activator and a repressor of the sonic hedgehog (Shh) pathway, and plays a role in limb development. The full-length GLI3 form (GLI3FL) after phosphorylation and nuclear translocation, acts as an activator (GLI3A) while GLI3R, its C-terminally truncated form, acts as a repressor. A proper balance between the GLI3 activator and the repressor GLI3R, rather than the repressor gradient itself or the activator/repressor ratio gradient, specifies limb digit number and identity. In concert with TRPS1, plays a role in regulating the size of the zone of distal chondrocytes, in restricting the zone of PTHLH expression in distal cells and in activating chondrocyte proliferation. Binds to the minimal GLI-consensus sequence 5'-GGGTGGTC-3'. In Homo sapiens (Human), this protein is Transcriptional activator GLI3 (GLI3).